The sequence spans 296 residues: UPF0761 membrane protein YE0031 (296 aa).

A run of 7 helical transmembrane segments spans residues 44–64, 67–87, 108–128, 136–156, 185–205, 212–232, and 246–266; these read LLSLVPLVTVIFALFAAFPMF, ISIKLKAFIFTNFMPATGDII, GLIVTALLLIYSVDSVLNIIW, LVFSFAVYWMVLTLGPILVGA, LFPLLISWVSFWLLYSVVPTV, ALIGALVAALFFELGKKGFTM, and VLAVIPILFLWVYWSWCIVLL.

It belongs to the UPF0761 family.

Its subcellular location is the cell inner membrane. This chain is UPF0761 membrane protein YE0031, found in Yersinia enterocolitica serotype O:8 / biotype 1B (strain NCTC 13174 / 8081).